Reading from the N-terminus, the 240-residue chain is Ribose-5-phosphate isomerase A (240 aa).

The segment at 1 to 23 (MKTSGGSDAAKRRAGESAAETVT) is disordered. Substrate-binding positions include 32 to 35 (TGST), 92 to 95 (DGAD), and 111 to 114 (KGGG). Glu120 (proton acceptor) is an active-site residue. Position 138 (Lys138) interacts with substrate.

Belongs to the ribose 5-phosphate isomerase family. In terms of assembly, homodimer.

It carries out the reaction aldehydo-D-ribose 5-phosphate = D-ribulose 5-phosphate. It functions in the pathway carbohydrate degradation; pentose phosphate pathway; D-ribose 5-phosphate from D-ribulose 5-phosphate (non-oxidative stage): step 1/1. Functionally, catalyzes the reversible conversion of ribose-5-phosphate to ribulose 5-phosphate. This Halorubrum lacusprofundi (strain ATCC 49239 / DSM 5036 / JCM 8891 / ACAM 34) protein is Ribose-5-phosphate isomerase A.